Reading from the N-terminus, the 371-residue chain is Caytaxin (371 aa).

A disordered region spans residues 1 to 54; sequence MGTTEATLRMENVDVKEEWQDEDLPRPLPEETGVELLGSPVEDTSSPPNTLNFN. The span at 11–29 shows a compositional bias: basic and acidic residues; that stretch reads ENVDVKEEWQDEDLPRPLP. Positions 42-53 are enriched in polar residues; sequence EDTSSPPNTLNF. The interval 115–120 is required for interaction with KLC1; that stretch reads ELEWGD. Positions 171–328 constitute a CRAL-TRIO domain; sequence IRPYMKVVTH…CVLQYEEERL (158 aa). The interval 190–371 is mediates interaction with GLS; sequence AIIVFAACFL…VTEDQETSMS (182 aa). A disordered region spans residues 331–371; it reads RRESARPQPEFVMPRSEEKPEVAPVENRSAPVTEDQETSMS.

Interacts with KLC1; may link mitochondria to KLC1 and regulate mitochondria localization into neuron projections. Interacts with GLS; the interaction is direct and may control GLS localization, negatively regulating its activity. Interacts with PIN1 (via WW domain); upon NGF stimulation. The interaction with PIN1 and GLS is competitive. In terms of processing, cleaved by CASP3 and CASP7. The potential C-terminal product released by CASP3 cleavage may inhibit the ERK signaling pathway through MAP2K2. Post-translationally, may be ubiquitinated by STUB1.

The protein resides in the cell projection. The protein localises to the axon. It is found in the dendrite. It localises to the presynapse. Its subcellular location is the mitochondrion. The protein resides in the growth cone. The protein localises to the cytoplasm. Its function is as follows. Functions in the development of neural tissues, particularly the postnatal maturation of the cerebellar cortex. May play a role in neurotransmission through regulation of glutaminase/GLS, an enzyme responsible for the production in neurons of the glutamate neurotransmitter. Alternatively, may regulate the localization of mitochondria within axons and dendrites. The chain is Caytaxin (ATCAY) from Macaca fascicularis (Crab-eating macaque).